The following is a 374-amino-acid chain: Peptide chain release factor 2 (374 aa).

Q248 is modified (N5-methylglutamine).

This sequence belongs to the prokaryotic/mitochondrial release factor family. In terms of processing, methylated by PrmC. Methylation increases the termination efficiency of RF2.

Its subcellular location is the cytoplasm. In terms of biological role, peptide chain release factor 2 directs the termination of translation in response to the peptide chain termination codons UGA and UAA. The sequence is that of Peptide chain release factor 2 from Thermomicrobium roseum (strain ATCC 27502 / DSM 5159 / P-2).